A 436-amino-acid polypeptide reads, in one-letter code: Enolase (436 aa).

Gln167 provides a ligand contact to (2R)-2-phosphoglycerate. Glu209 (proton donor) is an active-site residue. 3 residues coordinate Mg(2+): Asp246, Glu291, and Asp318. (2R)-2-phosphoglycerate-binding residues include Lys343, Arg372, Ser373, and Lys394. The active-site Proton acceptor is the Lys343.

Belongs to the enolase family. In terms of assembly, component of the RNA degradosome, a multiprotein complex involved in RNA processing and mRNA degradation. Mg(2+) serves as cofactor.

It localises to the cytoplasm. The protein resides in the secreted. The protein localises to the cell surface. It catalyses the reaction (2R)-2-phosphoglycerate = phosphoenolpyruvate + H2O. The protein operates within carbohydrate degradation; glycolysis; pyruvate from D-glyceraldehyde 3-phosphate: step 4/5. Functionally, catalyzes the reversible conversion of 2-phosphoglycerate (2-PG) into phosphoenolpyruvate (PEP). It is essential for the degradation of carbohydrates via glycolysis. The chain is Enolase from Haemophilus influenzae (strain PittGG).